The chain runs to 142 residues: Large ribosomal subunit protein uL13 (142 aa).

It belongs to the universal ribosomal protein uL13 family. As to quaternary structure, part of the 50S ribosomal subunit.

Its function is as follows. This protein is one of the early assembly proteins of the 50S ribosomal subunit, although it is not seen to bind rRNA by itself. It is important during the early stages of 50S assembly. In Stutzerimonas stutzeri (strain A1501) (Pseudomonas stutzeri), this protein is Large ribosomal subunit protein uL13.